Here is a 280-residue protein sequence, read N- to C-terminus: UPF0273 protein SSO1861 (280 aa).

Residues 2-246 (KRVKTYIPGL…YLKISNWSVS (245 aa)) form the KaiC domain. An ATP-binding site is contributed by 29-36 (GGPGTGKS).

Belongs to the UPF0273 family.

This Saccharolobus solfataricus (strain ATCC 35092 / DSM 1617 / JCM 11322 / P2) (Sulfolobus solfataricus) protein is UPF0273 protein SSO1861.